Reading from the N-terminus, the 159-residue chain is Ribosome maturation factor RimP (159 aa).

It belongs to the RimP family.

The protein resides in the cytoplasm. Required for maturation of 30S ribosomal subunits. The protein is Ribosome maturation factor RimP of Trichlorobacter lovleyi (strain ATCC BAA-1151 / DSM 17278 / SZ) (Geobacter lovleyi).